The chain runs to 244 residues: Thiol S-methyltransferase TMT1B (244 aa).

The signal sequence occupies residues 1-23 (MDALVLFLQLLVLLLTLPLHLLA).

This sequence belongs to the methyltransferase superfamily.

The protein localises to the endoplasmic reticulum membrane. It is found in the lipid droplet. Its subcellular location is the microsome. It localises to the cytoplasm. The protein resides in the cytosol. The catalysed reaction is a thiol + S-adenosyl-L-methionine = a methyl thioether + S-adenosyl-L-homocysteine + H(+). Thiol S-methyltransferase that catalyzes the transfer of a methyl group from S-adenosyl-L-methionine to alkyl and phenolic thiol-containing acceptor substrates. Together with TMT1B accounts for most of S-thiol methylation activity in the endoplasmic reticulum of hepatocytes. Selectively methylates S-centered nucleophiles from metabolites such as hydrogen sulfide and dithiothreitol. The protein is Thiol S-methyltransferase TMT1B of Mus musculus (Mouse).